The primary structure comprises 540 residues: Mitochondrial antiviral-signaling protein (540 aa).

N-acetylproline is present on P2. Residues 2-513 lie on the Cytoplasmic side of the membrane; the sequence is PFAEDKTYKY…REVPCHRPSP (512 aa). Residues K7 and K10 each participate in a glycyl lysine isopeptide (Lys-Gly) (interchain with G-Cter in ubiquitin) cross-link. A CARD domain is found at 10-77; sequence KYICRNFSNF…WVEYFIAALR (68 aa). Residues 10–77 form a required for interaction with NLRX1 region; sequence KYICRNFSNF…WVEYFIAALR (68 aa). Residue C79 is the site of S-palmitoyl cysteine attachment. The interval 95-297 is disordered; the sequence is YQPRTSDRPP…EAPANSLPSK (203 aa). Residues 106 to 122 are compositionally biased toward pro residues; it reads PLEPPSLPAERPGPPTP. Residues 143–147 are interaction with TRAF2; the sequence is PVQET. Composition is skewed to polar residues over residues 145-165 and 179-216; these read QETQ…QTLS and ESSS…SLTP. 5 positions are modified to phosphoserine: S152, S157, S165, S180, and S188. The tract at residues 153 to 158 is interaction with TRAF6; that stretch reads PGENSE. Phosphothreonine is present on T215. Phosphoserine is present on residues S222 and S233. Position 234 is a phosphothreonine (T234). Position 236 is an asymmetric dimethylarginine (R236). Low complexity predominate over residues 241-266; that stretch reads PGPTGSVVSTGTSFSSSSPGLASAGA. Residues S253 and S258 each carry the phosphoserine modification. Residues K311 and K325 each participate in a glycyl lysine isopeptide (Lys-Gly) (interchain with G-Cter in ubiquitin) cross-link. Disordered regions lie at residues 314-358 and 373-419; these read ANPA…RAGM and SAST…SELS. 3 stretches are compositionally biased toward polar residues: residues 317–331, 339–355, and 373–382; these read ASVS…TSSK, NALT…NSTR, and SASTVPTDGS. Low complexity predominate over residues 388–403; that stretch reads TPAAPTPAGATGGSSA. S408 carries the post-translational modification Phosphoserine. The pLxIS motif signature appears at 439–442; it reads LAIS. S442 is subject to Phosphoserine; by TBK1. An interaction with TRAF6 region spans residues 455 to 460; it reads PEENEY. Residues K461 and K500 each participate in a glycyl lysine isopeptide (Lys-Gly) (interchain with G-Cter in ubiquitin) cross-link. A (Microbial infection) Glycyl lysine isopeptide (Lys-Gly) (interchain with G-Cter in UFM1) cross-link involves residue K461. The disordered stretch occupies residues 476–507; that stretch reads IQLLEGNPGPPADPDGGPRPQADRKFQEREVP. Residues 496-507 are compositionally biased toward basic and acidic residues; it reads QADRKFQEREVP. A helical transmembrane segment spans residues 514-534; the sequence is GALWLQVAVTGVLVVTLLVVL. Topologically, residues 535-540 are mitochondrial intermembrane; it reads YRRRLH.

As to quaternary structure, self-associates and polymerizes (via CARD domains) to form 400 nM long three-stranded helical filaments on mitochondria, filament nucleation requires interaction with RIGI whose CARD domains act as a template for filament assembly. Interacts with RIGI, IFIH1/MDA5, TRAF2, TRAF6 and C1QBP. May interact with FADD, RIPK1, CHUK and IKBKB. Interacts (when phosphorylated) with IRF3; following activation and phosphorylation on the pLxIS motif by TBK1, recruits IRF3. Interacts with NLRX1. Interaction with NLRX1 requires the CARD domain. Interacts with PSMA7. Interacts with TRAFD1. Interacts (via C-terminus) with PCBP2 in a complex containing MAVS/IPS1, PCBP2 and ITCH. Interacts with CYLD. Interacts with SRC. Interacts with DHX58/LGP2 and IKBKE. Interacts with STING1. Interacts with IFIT3 (via N-terminus). Interacts with TBK1 only in the presence of IFIT3. Interacts with TTLL12; the interaction prevents MAVS binding to TBK1 and IKBKE. Interacts with MUL1. Interacts with ANKRD17. Interacts with NDFIP1. Interacts with SMURF1; the interaction is mediated by NDFIP1 and leads to MAVS ubiquitination and degradation. Interacts with UBXN1; this interaction inhibits MAVS-mediated antiviral pathway. Interacts (via C-terminus) with GPATCH3; the interaction is markedly increased upon viral infection. Directly interacts (via CARD domain) with ATG5 and ATG12, either as ATG5 and ATG12 monomers or as ATG12-ATG5 conjugates. Interacts with DHX33 (via the helicase C-terminal domain). Interacts with DDX3X (via C-terminus); this interaction occurs rapidly, but transiently after Sendai virus infection. The interaction with DDX3X potentiates MAVS-mediated IFNB induction. Conversely inhibition of this interaction, for instance by HCV core protein, prevents MAVS-mediated IFNB induction. Transiently interacts with TRAF3 early during Sendai virus infection. Interacts with CLPB; the interaction is enhanced by Sendai virus infection. Interacts with TRAF3IP3. Interacts with TOMM70; the interaction is enhanced by Sendai virus infection. Interacts with ZNFX1. Interacts with N4BP3; this interaction promotes the polyubiquitination of MAVS. Interacts with TAX1BP1; this interaction induces MAVS polyubiquitination. Interacts with NLRP3; promoting NLRP3 recruitment to mitochondria and activation of the NLRP3 inflammasome. Interacts with ECSIT; this interaction bridges RIGI to the MAVS complex at the mitochondrion. Interacts with UBL7; this interaction promotes MAVS 'Lys-27'-linked ubiquitination leading to type I interferon production. Interacts (via transmembrane domain) with SMIM30/MAVI1 (via transmembrane domain); the interaction disrupts MAVS interaction with RIGI and inhibits MAVS aggregation, resulting in the repression of type I interferon signaling and innate immune responses. (Microbial infection) Interacts with hepatitis C virus (HCV) NS3/4A protease; this interaction leads to MAVS cleavage, thereby preventing the establishment of an antiviral state. In terms of assembly, (Microbial infection) Interacts with hepatitis GB virus B NS3/4A protease; this interaction leads to MAVS cleavage. As to quaternary structure, (Microbial infection) Interacts with human respiratory syncytial virus/HRSV protein NS1; this interaction disrupts MAVS binding to RIGI. (Microbial infection) Interacts with Andes virus Nnon-structural protein NS-S; this interaction may reduce MAVS ubiquitination and leads to inhibition of MAVS-induced type-I IFN signaling pathway. In terms of assembly, (Microbial infection) Interacts with Seneca Valley virus protease 3C; this interaction allows the cleavage of MAVS and subsequent suppression of host innate immunity. As to quaternary structure, (Microbial infection) Interacts with SARS-CoV virus protein ORF9b; this interaction mediates MAVS proteasomal degradation. (Microbial infection) Interacts with SARS-CoV-2 virus protein M; this interaction impairs MAVS self-association and its recruitment of downstream components. In terms of assembly, (Microbial infection) Interacts with foot-and-mouth disease virus protein VP1; this interaction competes with TRAF3 interaction to MAVS leading to suppression of host innate immunity. As to quaternary structure, (Microbial infection) Interacts with Epstein-Barr virus protein BILF1; this interaction mediates MAVS routing from mitochondria to lysosomes. Post-translationally, following activation, phosphorylated by TBK1 at Ser-442 in the pLxIS motif. The phosphorylated pLxIS motif constitutes an IRF3-binding motif, leading to recruitment of the transcription factor IRF3 to induce type-I interferons and other cytokines. Ubiquitinated. Undergoes 'Lys-48'-linked polyubiquitination catalyzed by ITCH; ITCH-dependent polyubiquitination is mediated by the interaction with PCBP2 and leads to MAVS/IPS1 proteasomal degradation. Ubiquitinated by RNF125, leading to its degradation by the proteasome. Undergoes 'Lys-48'-linked ubiquitination catalyzed by SMURF1. Undergoes 'Lys-48'-linked ubiquitination catalyzed by MARCHF5 at Lys-7 and Lys-500, leading to proteasomal degradation. Ubiquitinated via 'Lys-63'-linked ubiquitination at Lys-10, Lys-311 and Lys-461 by UBE2N and TRIM31, promoting MAVS polymerization and formation of three-stranded helical filaments on mitochondria. Undergoes 'Lys-63'-linked ubiquitination leading to enhanced interaction between MAVS and TRAF2. Undergoes 'Lys-27'-linked ubiquitination by TRIM21 leading to enhanced interaction between MAVS and TBK1. Deubiquitinated by USP10 leading to attenuation of RIGI-mediated MAVS aggregation and production of type I interferon. Undergoes 'Lys-48'-linked polyubiquitination catalyzed by RNF115 leading to its degradation. In terms of processing, palmitoylated by ZHDDC4. Palmitoylation promotes MAVS stabilization and activation by inhibiting 'Lys-48'- but facilitating 'Lys-63'-linked ubiquitination. Post-translationally, proteolytically cleaved by apoptotic caspases during apoptosis, leading to its inactivation. Cleavage by CASP3 during virus-induced apoptosis inactivates it, preventing cytokine overproduction. (Microbial infection) Cleaved and degraded by hepatitis A virus (HAV) protein 3ABC allowing the virus to disrupt the activation of host IRF3 through the MDA5 pathway. In terms of processing, (Microbial infection) Cleaved by the protease 2A of coxsackievirus B3, poliovirus and enterovirus 71 allowing the virus to disrupt the host type I interferon production. Post-translationally, (Microbial infection) Cleaved by Seneca Valley virus protease 3C allowing the virus to suppress interferon type-I production. (Microbial infection) Cleaved by HCV protease NS3/4A, thereby preventing the establishment of an antiviral state. In terms of processing, (Microbial infection) UFMylated by ULF1 in association with Epstein-Barr virus BILF1; leading to MAVS routing to the lysosome. As to expression, present in T-cells, monocytes, epithelial cells and hepatocytes (at protein level). Ubiquitously expressed, with highest levels in heart, skeletal muscle, liver, placenta and peripheral blood leukocytes.

The protein resides in the mitochondrion outer membrane. It localises to the mitochondrion. Its subcellular location is the peroxisome. Functionally, adapter required for innate immune defense against viruses. Acts downstream of DHX33, RIGI and IFIH1/MDA5, which detect intracellular dsRNA produced during viral replication, to coordinate pathways leading to the activation of NF-kappa-B, IRF3 and IRF7, and to the subsequent induction of antiviral cytokines such as IFNB and RANTES (CCL5). Peroxisomal and mitochondrial MAVS act sequentially to create an antiviral cellular state. Upon viral infection, peroxisomal MAVS induces the rapid interferon-independent expression of defense factors that provide short-term protection, whereas mitochondrial MAVS activates an interferon-dependent signaling pathway with delayed kinetics, which amplifies and stabilizes the antiviral response. May activate the same pathways following detection of extracellular dsRNA by TLR3. May protect cells from apoptosis. Involved in NLRP3 inflammasome activation by mediating NLRP3 recruitment to mitochondria. The protein is Mitochondrial antiviral-signaling protein of Homo sapiens (Human).